The chain runs to 548 residues: Rhodopsin kinase grk7-b (548 aa).

Ser33 is modified (phosphoserine; by PKA). Residues 53 to 172 (FEDICEQQPI…QTSLFFDRFV (120 aa)) enclose the RGS domain. Positions 187–446 (FYEFRTLGKG…NDDPRKHEFF (260 aa)) constitute a Protein kinase domain. Residues 193–201 (LGKGGFGEV) and Lys216 each bind ATP. Catalysis depends on Asp312, which acts as the Proton acceptor. One can recognise an AGC-kinase C-terminal domain in the interval 447-512 (KSINFPRLEA…GVVPIAWQQE (66 aa)). The interval 520–548 (DELSDPNRKESAAGLEDEEQQKSKSCTLL) is disordered. Cys545 is modified (cysteine methyl ester). Residue Cys545 is the site of S-geranylgeranyl cysteine attachment. Residues 546-548 (TLL) constitute a propeptide, removed in mature form.

The protein belongs to the protein kinase superfamily. AGC Ser/Thr protein kinase family. GPRK subfamily. In terms of processing, phosphorylation at Ser-33 is regulated by light and activated by cAMP. As to expression, expressed in the eyes (at protein level). Expressed in the eyes, the pineal gland and in the brain.

The protein resides in the membrane. The enzyme catalyses L-threonyl-[rhodopsin] + ATP = O-phospho-L-threonyl-[rhodopsin] + ADP + H(+). It carries out the reaction L-seryl-[rhodopsin] + ATP = O-phospho-L-seryl-[rhodopsin] + ADP + H(+). In terms of biological role, retina-specific kinase involved in the shutoff of the photoresponse and adaptation to changing light conditions via cone opsin phosphorylation, including rhodopsin (RHO). The protein is Rhodopsin kinase grk7-b (grk7b) of Danio rerio (Zebrafish).